Here is a 663-residue protein sequence, read N- to C-terminus: Leishmanolysin-like peptidase (663 aa).

Zn(2+) is bound at residue histidine 246. Residue glutamate 247 is part of the active site. 2 residues coordinate Zn(2+): histidine 250 and histidine 353.

It belongs to the peptidase M8 family. It depends on Zn(2+) as a cofactor.

It is found in the cytoplasm. In terms of biological role, essential for the coordination of mitotic progression, and also plays a role in cell migration. The protein is Leishmanolysin-like peptidase of Caenorhabditis elegans.